The following is a 1388-amino-acid chain: Collagen alpha-1(XV) chain (1388 aa).

A signal peptide spans 1-27; that stretch reads MAPRRNNGQCWCLLMLLSVSTPLPAVT. Residues 66-249 form the Laminin G-like domain; it reads AYSFGPGANV…SSASGETSGL (184 aa). A disordered region spans residues 223–250; it reads TVHPDPRTPEELCDPEESSASGETSGLQ. Positions 229 to 555 are nonhelical region 1 (NC1); the sequence is RTPEELCDPE…WITPAQREHV (327 aa). Polar residues predominate over residues 240-249; it reads SSASGETSGL. O-linked (Xyl...) (chondroitin sulfate) serine glycosylation is found at serine 243 and serine 247. O-linked (GalNAc...) threonine glycosylation is present at threonine 265. The segment at 266–301 is disordered; that stretch reads QASPKEAKVEPINTPPTPSSPFEDMELSGEPVPEGT. Asparagine 306 and asparagine 324 each carry an N-linked (GlcNAc...) asparagine glycan. Serine 343 carries O-linked (Xyl...) (chondroitin sulfate) serine glycosylation. 4 consecutive repeat copies span residues 358 to 408, 409 to 459, 460 to 509, and 510 to 555. The 4 X tandem repeats stretch occupies residues 358–555; it reads AATAAGLAEV…WITPAQREHV (198 aa). Positions 371 to 795 are disordered; that stretch reads TAGEAEASSV…VGPPGPRGPP (425 aa). A compositionally biased stretch (polar residues) spans 379–392; the sequence is SVPTGGPTLSMSTE. A compositionally biased stretch (low complexity) spans 409–420; sequence AATAAGEAEALA. A compositionally biased stretch (polar residues) spans 452-472; the sequence is GPSSEDSLTTAAAATEVSLST. The segment covering 510-527 has biased composition (low complexity); sequence AAATTEEPLITAGGEESG. The segment covering 528–540 has biased composition (pro residues); it reads SPPPDGPPLPLPT. A triple-helical region 1 (COL1) region spans residues 556–573; sequence GMKGQAGPKGEKGDAGEE. The interval 574-618 is nonhelical region 2 (NC2); the sequence is LPGPPEPSGPVGPTAGAEAEGSGLGWGSDVGSGSGDLVGSEQLLR. Residues 595-609 show a composition bias toward gly residues; that stretch reads SGLGWGSDVGSGSGD. 2 Collagen-like domains span residues 619 to 680 and 681 to 731; these read GPPG…MKGE and KGAR…PPGP. Residues 619 to 732 form a triple-helical region 2 (COL2) region; sequence GPPGPPGPPG…PGPPGPPGPG (114 aa). Residues 620-630 are compositionally biased toward pro residues; the sequence is PPGPPGPPGLP. A glycan (N-linked (GlcNAc...) asparagine) is linked at asparagine 687. Residues 716–731 show a composition bias toward pro residues; sequence VMGPPGPPGPPGPPGP. The nonhelical region 3 (NC3) stretch occupies residues 733–763; the sequence is CTMGLGFEDTEGSGSTQLLNEPKLSRPTAAI. O-linked (Xyl...) (chondroitin sulfate) serine glycosylation occurs at serine 745. Residues 764–798 form a triple-helical region 3 (COL3) region; that stretch reads GLKGEKGDRGPKGERGMDGASIVGPPGPRGPPGHI. The span at 766–780 shows a compositional bias: basic and acidic residues; that stretch reads KGEKGDRGPKGERGM. The segment at 799 to 822 is nonhelical region 4 (NC4); it reads KVLSNSLINITHGFMNFSDIPELV. 2 N-linked (GlcNAc...) asparagine glycosylation sites follow: asparagine 807 and asparagine 814. The region spanning 823 to 865 is the Collagen-like 3 domain; sequence GPPGPDGLPGLPGFPGPRGPKGDTGLPGFPGLKGEQGEKGEPG. Residues 823–867 form a triple-helical region 4 (COL4) region; that stretch reads GPPGPDGLPGLPGFPGPRGPKGDTGLPGFPGLKGEQGEKGEPGAI. The segment covering 827-840 has biased composition (pro residues); it reads PDGLPGLPGFPGPR. The disordered stretch occupies residues 827 to 864; sequence PDGLPGLPGFPGPRGPKGDTGLPGFPGLKGEQGEKGEP. The interval 868-878 is nonhelical region 5 (NC5); it reads LTEDIPLERLM. The 49-residue stretch at 879-927 folds into the Collagen-like 4 domain; that stretch reads GKKGEPGMHGAPGPMGPKGPPGHKGEFGLPGRPGRPGLNGLKGTKGDPG. The segment at 879 to 949 is triple-helical region 5 (COL5); it reads GKKGEPGMHG…PGPPGPPGAV (71 aa). The interval 950–983 is nonhelical region 6 (NC6); the sequence is INIKGAIFPIPVRPHCKMPVDTAHPGSPELITFH. The segment at 984 to 1013 is triple-helical region 6 (COL6); sequence GVKGEKGSWGLPGSKGEKGDQGAQGPPGPP. Disordered regions lie at residues 988 to 1016 and 1029 to 1133; these read EKGS…PLDL and ENGD…GSRN. Positions 1014–1027 are nonhelical region 7 (NC7); that stretch reads LDLAYLRHFLNNLK. Positions 1028–1045 are triple-helical region 7 (COL7); that stretch reads GENGDKGFKGEKGEKGDI. Residues 1029–1044 show a composition bias toward basic and acidic residues; that stretch reads ENGDKGFKGEKGEKGD. An N-linked (GlcNAc...) asparagine glycan is attached at asparagine 1046. The interval 1046 to 1052 is nonhelical region 8 (NC8); that stretch reads NGSFLMS. Positions 1053 to 1107 are triple-helical region 8 (COL8); that stretch reads GPPGLPGNPGPAGQKGETVVGPQGPPGAPGLPGPPGFGRPGDPGPPGPPGPPGPP. Pro residues-rich tracts occupy residues 1075 to 1107 and 1117 to 1126; these read QGPP…PGPP and PGPPGPPGQP. The segment at 1108-1117 is nonhelical region 9 (NC9); it reads AILGAAVALP. The segment at 1118–1132 is triple-helical region 9 (COL9); that stretch reads GPPGPPGQPGLPGSR. The tract at residues 1133-1388 is nonhelical region 10 (NC10); it reads NLVTAFSNMD…ENSFMTDARK (256 aa). Disulfide bonds link cysteine 1237–cysteine 1377 and cysteine 1339–cysteine 1369.

It belongs to the multiplexin collagen family. In terms of assembly, trimer; disulfide-linked. Interacts moderately with EFEMP2. In terms of processing, prolines at the third position of the tripeptide repeating unit (G-X-Y) are hydroxylated in some or all of the chains. O-glycosylated; with core 1 or possibly core 8 glycans. Contains chondroitin sulfate. In terms of tissue distribution, detected in fibroblasts and urine (at protein level). Detected in placenta (at protein level). Expressed predominantly in internal organs such as adrenal gland, pancreas and kidney.

The protein localises to the secreted. The protein resides in the extracellular space. It is found in the extracellular matrix. Structural protein that stabilizes microvessels and muscle cells, both in heart and in skeletal muscle. In terms of biological role, restin potently inhibits angiogenesis. The chain is Collagen alpha-1(XV) chain (COL15A1) from Homo sapiens (Human).